Consider the following 376-residue polypeptide: ORC1-type DNA replication protein 2 (376 aa).

Residues Thr73–Ser77, Tyr209, and Arg221 contribute to the ATP site.

Belongs to the CDC6/cdc18 family.

Its function is as follows. Involved in regulation of DNA replication. The sequence is that of ORC1-type DNA replication protein 2 (cdc6-2) from Archaeoglobus fulgidus (strain ATCC 49558 / DSM 4304 / JCM 9628 / NBRC 100126 / VC-16).